A 311-amino-acid polypeptide reads, in one-letter code: Probable dihydroorotate dehydrogenase A (fumarate) (311 aa).

Residues Ser-20 and 44–45 (KT) contribute to the FMN site. Substrate contacts are provided by residues Lys-44, 68-72 (NSMGL), and Asn-127. Residue Asn-127 coordinates FMN. Catalysis depends on Cys-130, which acts as the Nucleophile. FMN-binding residues include Lys-164 and Ile-192. 193–194 (NS) is a substrate binding site. FMN contacts are provided by residues Gly-221, 249–250 (GG), and 271–272 (GT).

The protein belongs to the dihydroorotate dehydrogenase family. Type 1 subfamily. Homodimer. FMN serves as cofactor.

Its subcellular location is the cytoplasm. The catalysed reaction is (S)-dihydroorotate + fumarate = orotate + succinate. It functions in the pathway pyrimidine metabolism; UMP biosynthesis via de novo pathway. Functionally, catalyzes the conversion of dihydroorotate to orotate with fumarate as the electron acceptor. This Enterococcus faecalis (strain ATCC 700802 / V583) protein is Probable dihydroorotate dehydrogenase A (fumarate) (pyrDA).